We begin with the raw amino-acid sequence, 199 residues long: Protein GrpE (199 aa).

A compositionally biased stretch (polar residues) spans 1-17; that stretch reads MSDSDNNTKSQQNNPTQ. Residues 1-36 form a disordered region; the sequence is MSDSDNNTKSQQNNPTQTDEKSGEEIQSNQKPQRKF.

This sequence belongs to the GrpE family. In terms of assembly, homodimer.

The protein localises to the cytoplasm. Functionally, participates actively in the response to hyperosmotic and heat shock by preventing the aggregation of stress-denatured proteins, in association with DnaK and GrpE. It is the nucleotide exchange factor for DnaK and may function as a thermosensor. Unfolded proteins bind initially to DnaJ; upon interaction with the DnaJ-bound protein, DnaK hydrolyzes its bound ATP, resulting in the formation of a stable complex. GrpE releases ADP from DnaK; ATP binding to DnaK triggers the release of the substrate protein, thus completing the reaction cycle. Several rounds of ATP-dependent interactions between DnaJ, DnaK and GrpE are required for fully efficient folding. The sequence is that of Protein GrpE from Ehrlichia canis (strain Jake).